A 356-amino-acid chain; its full sequence is Phospho-N-acetylmuramoyl-pentapeptide-transferase (356 aa).

10 helical membrane passes run I4–H24, G53–W73, P76–L96, L116–V136, I152–G172, L186–F206, D228–A248, I253–V273, L278–V298, and F333–V353.

This sequence belongs to the glycosyltransferase 4 family. MraY subfamily. It depends on Mg(2+) as a cofactor.

It localises to the cell membrane. It carries out the reaction UDP-N-acetyl-alpha-D-muramoyl-L-alanyl-gamma-D-glutamyl-meso-2,6-diaminopimeloyl-D-alanyl-D-alanine + di-trans,octa-cis-undecaprenyl phosphate = di-trans,octa-cis-undecaprenyl diphospho-N-acetyl-alpha-D-muramoyl-L-alanyl-D-glutamyl-meso-2,6-diaminopimeloyl-D-alanyl-D-alanine + UMP. Its pathway is cell wall biogenesis; peptidoglycan biosynthesis. Catalyzes the initial step of the lipid cycle reactions in the biosynthesis of the cell wall peptidoglycan: transfers peptidoglycan precursor phospho-MurNAc-pentapeptide from UDP-MurNAc-pentapeptide onto the lipid carrier undecaprenyl phosphate, yielding undecaprenyl-pyrophosphoryl-MurNAc-pentapeptide, known as lipid I. This Cutibacterium acnes (strain DSM 16379 / KPA171202) (Propionibacterium acnes) protein is Phospho-N-acetylmuramoyl-pentapeptide-transferase.